Here is a 20-residue protein sequence, read N- to C-terminus: C-reactive protein (20 aa).

The Pentraxin (PTX) domain occupies Ser-1–Phe-20.

Belongs to the pentraxin family. Homodimer; disulfide-linked. It is not known if it assembles into a pentraxin (or pentaxin) structure. Pentraxins have a discoid arrangement of 5 non-covalently bound subunits. In terms of processing, glycosylated.

It localises to the secreted. In terms of biological role, displays several functions associated with host defense: it promotes agglutination, bacterial capsular swelling, phagocytosis, and complement fixation through its calcium-dependent binding to phosphorylcholine. This chain is C-reactive protein, found in Mustelus canis (Smooth dogfish).